An 828-amino-acid chain; its full sequence is Putative alpha-1,3-mannosyltransferase MNN12 (828 aa).

Residues 1-13 (MIEKLTIKRSRQK) lie on the Cytoplasmic side of the membrane. The helical transmembrane segment at 14–34 (VIAYSVIIIWLMIVNIWLLNN) threads the bilayer. Residues 35 to 828 (YHLNSSTLTR…YYGDVWVGME (794 aa)) are Lumenal-facing. N-linked (GlcNAc...) asparagine glycosylation occurs at asparagine 38. The segment at 80–104 (HQEEDVPNSQSTDNSLIKPTSPAKN) is disordered. The span at 86–103 (PNSQSTDNSLIKPTSPAK) shows a compositional bias: polar residues. N-linked (GlcNAc...) asparagine glycans are attached at residues asparagine 247, asparagine 437, and asparagine 591.

This sequence belongs to the MNN1/MNT family.

The protein localises to the golgi apparatus membrane. It participates in protein modification; protein glycosylation. Functionally, responsible for addition of the terminal mannose residues to the outer chain of core N-linked polysaccharides and to O-linked mannotriose. Implicated in late Golgi modifications. The polypeptide is Putative alpha-1,3-mannosyltransferase MNN12 (MNN12) (Candida albicans (strain SC5314 / ATCC MYA-2876) (Yeast)).